A 544-amino-acid chain; its full sequence is Probable protein kinase UbiB (544 aa).

Positions 123 to 501 (EFDIKPLASA…KRQQATGKFL (379 aa)) constitute a Protein kinase domain. ATP is bound by residues 129-137 (LASASIAQV) and K152. D287 functions as the Proton acceptor in the catalytic mechanism. A run of 2 helical transmembrane segments spans residues 496–516 (ATGK…AILV) and 519–539 (AYEQ…LLSW).

This sequence belongs to the ABC1 family. UbiB subfamily.

The protein localises to the cell inner membrane. It functions in the pathway cofactor biosynthesis; ubiquinone biosynthesis [regulation]. Is probably a protein kinase regulator of UbiI activity which is involved in aerobic coenzyme Q (ubiquinone) biosynthesis. In Vibrio campbellii (strain ATCC BAA-1116), this protein is Probable protein kinase UbiB.